A 304-amino-acid polypeptide reads, in one-letter code: Homoserine kinase (304 aa).

92–102 (PLARGLGSSAT) provides a ligand contact to ATP.

The protein belongs to the GHMP kinase family. Homoserine kinase subfamily.

It localises to the cytoplasm. The catalysed reaction is L-homoserine + ATP = O-phospho-L-homoserine + ADP + H(+). Its pathway is amino-acid biosynthesis; L-threonine biosynthesis; L-threonine from L-aspartate: step 4/5. In terms of biological role, catalyzes the ATP-dependent phosphorylation of L-homoserine to L-homoserine phosphate. The sequence is that of Homoserine kinase from Nostoc punctiforme (strain ATCC 29133 / PCC 73102).